The following is a 141-amino-acid chain: Hemoglobin subunit alpha-A (141 aa).

The region spanning 1-141 (VLSAADKTNV…VGTVLTAKYR (141 aa)) is the Globin domain. His-58 contacts O2. His-87 provides a ligand contact to heme b.

Belongs to the globin family. As to quaternary structure, heterotetramer of two alpha chains and two beta chains. Red blood cells.

Functionally, involved in oxygen transport from the lung to the various peripheral tissues. This chain is Hemoglobin subunit alpha-A (HBAA), found in Branta canadensis (Canada goose).